The following is a 419-amino-acid chain: Methionine aminopeptidase 2 (419 aa).

The disordered stretch occupies residues 1–69; that stretch reads MSTNSSNPNE…KITAIDNSYP (69 aa). Basic and acidic residues predominate over residues 11–29; sequence VMEKVQDLKIDDSKPKVDS. Residues 30–41 show a composition bias toward acidic residues; that stretch reads EEQPEAESDGES. The segment covering 48–61 has biased composition (basic residues); that stretch reads KKKKKKKSKKKKKI. His172 lines the substrate pocket. A divalent metal cation-binding residues include Asp192, Asp203, and His272. His280 contributes to the substrate binding site. A divalent metal cation contacts are provided by Glu305 and Glu400.

This sequence belongs to the peptidase M24A family. Methionine aminopeptidase eukaryotic type 2 subfamily. Co(2+) serves as cofactor. Zn(2+) is required as a cofactor. It depends on Mn(2+) as a cofactor. Requires Fe(2+) as cofactor.

Its subcellular location is the cytoplasm. It catalyses the reaction Release of N-terminal amino acids, preferentially methionine, from peptides and arylamides.. Cotranslationally removes the N-terminal methionine from nascent proteins. The N-terminal methionine is often cleaved when the second residue in the primary sequence is small and uncharged (Met-Ala-, Cys, Gly, Pro, Ser, Thr, or Val). The polypeptide is Methionine aminopeptidase 2 (Debaryomyces hansenii (strain ATCC 36239 / CBS 767 / BCRC 21394 / JCM 1990 / NBRC 0083 / IGC 2968) (Yeast)).